We begin with the raw amino-acid sequence, 322 residues long: FAD-dependent monooxygenase subE (322 aa).

Residues Glu35, Gly49, Arg108, and Asp313 each coordinate FAD.

The protein belongs to the paxM FAD-dependent monooxygenase family. The cofactor is FAD.

Its pathway is secondary metabolite biosynthesis; terpenoid biosynthesis. Functionally, FAD-dependent monooxygenase; part of the gene cluster that mediates the biosynthesis of the immunosuppressants subglutinols, meroterpenoids consisting of an alpha-pyrone (4-hydroxy-5,6-dimethyl-2-pyrone) moiety attached to a decalin core fused to a five-membered cyclic ether carrying a prenylside chain. The first step of the pathway is the synthesis of the alpha-pyrone moiety by the polyketide synthase subA via condensation of one acetyl-CoA starter unit with 3 malonyl-CoA units and 2 methylations. The alpha-pyrone is then combined with geranylgeranyl pyrophosphate (GGPP) formed by the GGPP synthase subD through the action of the prenyltransferase subC to yield a linear alpha-pyrone diterpenoid. Subsequent steps in the subglutinol biosynthetic pathway involve the decalin core formation, which is thought to be initiated by the epoxidation of the C10-C11 olefin by the FAD-dependent oxidoreductase subE. The following cyclization cascade would be catalyzed by the terpene cyclase subB. Lastly, the FAD-dependent dehydrogenase subF probably catalyzes the five-membered cyclic ether formation to complete the formation of subglutinol A. Subsequent redox reactions appear to give rise to subglutinol C and D, however, it remains unclear which enzymes are responsible for these transformations. SubD may have secondary function in the conversion of the identified subglutinols to subglutinol analog 45, which seems to be the major product of the cluster. This chain is FAD-dependent monooxygenase subE, found in Metarhizium robertsii (strain ARSEF 23 / ATCC MYA-3075) (Metarhizium anisopliae (strain ARSEF 23)).